We begin with the raw amino-acid sequence, 478 residues long: MKTLTPSVEIFFFPYVGGGHQIPMIDAARMFASHGASSTILATPSTTPLFQKCITRDQKFGLPISIHTLSADVPQSDISVGPFLDTSALLEPLRQLLLQRRPHCIVVDMFHRWSGDVVYELGIPRTLFNGIGCFALCVQENLRHVAFKSVSTDSEPFLVPNIPDRIEMTMSQLPPFLRNPSGIPERWRGMKQLEEKSFGTLINSFYDLEPAYADLIKSKWGNKAWIVGPVSFCNRSKEDKTERGKPPTIDEQNCLNWLNSKKPSSVLYASFGSLARLPPEQLKEIAYGLEASEQSFIWVVGNILHNPSENKENGSGNWLPEGFEQRMKETGKGLVLRGWAPQLLILEHAAIKGFMTHCGWNSTLEGVSAGVPMITWPLTAEQFSNEKLITEVLKTGVQVGNREWWPWNAEWKGLVGREKVEVAVRKLMVESVEADEMRRRAKDIAGKAARAVEEGGTSYADVEALIQELQARTCANQG.

Catalysis depends on His20, which acts as the Proton acceptor. An an anthocyanidin-binding site is contributed by His20. Asp108 serves as the catalytic Charge relay. UDP-alpha-D-glucose is bound by residues Ala340, Gln342, His357, Trp360, Asn361, Ser362, and Glu365. Ala380 contributes to the an anthocyanidin binding site. Positions 381 and 382 each coordinate UDP-alpha-D-glucose.

It belongs to the UDP-glycosyltransferase family.

It carries out the reaction 2-cis-(+)-abscisate + UDP-alpha-D-glucose = beta-D-glucopyranosyl cis-(+)-abscisate + UDP. Functionally, glucosyltransferase involved in the catabolism of abscisic acid (ABA). Adds a glucosyl group at the C-1 position of ABA; (S)-2-trans-abscisate is a better substrate than the natural (+)-S-abscisate or its enantiomer (-)-R-abscisate. No activity with (-)-phaseic acid (PA), methylated-ABA or with other hormones such as jasmonate, zeatin, auxin (IAA) or gibberellin A3 (GA3). This chain is Abscisate beta-glucosyltransferase (AOG), found in Phaseolus angularis (Azuki bean).